Here is a 326-residue protein sequence, read N- to C-terminus: Serpentine receptor class gamma-14 (326 aa).

The next 7 helical transmembrane spans lie at glutamine 36–tryptophan 56, phenylalanine 67–isoleucine 83, isoleucine 115–valine 135, leucine 156–isoleucine 176, phenylalanine 204–leucine 224, valine 243–phenylalanine 263, and glycine 274–valine 294.

Belongs to the nematode receptor-like protein srg family.

The protein localises to the membrane. This is Serpentine receptor class gamma-14 (srg-14) from Caenorhabditis elegans.